The following is a 585-amino-acid chain: Phosphomethylpyrimidine synthase (585 aa).

The span at 89–107 shows a compositional bias: basic and acidic residues; that stretch reads RGDTESYEGRHVKPEDNGY. The interval 89 to 116 is disordered; that stretch reads RGDTESYEGRHVKPEDNGYRSRNGSHQH. Residues Asn-199, Met-228, Tyr-257, His-293, 313–315, 354–357, and Glu-393 contribute to the substrate site; these read SRG and DGLR. His-397 is a Zn(2+) binding site. Tyr-420 contacts substrate. His-461 contributes to the Zn(2+) binding site. [4Fe-4S] cluster contacts are provided by Cys-541, Cys-544, and Cys-549.

Belongs to the ThiC family. Requires [4Fe-4S] cluster as cofactor.

The catalysed reaction is 5-amino-1-(5-phospho-beta-D-ribosyl)imidazole + S-adenosyl-L-methionine = 4-amino-2-methyl-5-(phosphooxymethyl)pyrimidine + CO + 5'-deoxyadenosine + formate + L-methionine + 3 H(+). Its pathway is cofactor biosynthesis; thiamine diphosphate biosynthesis. Catalyzes the synthesis of the hydroxymethylpyrimidine phosphate (HMP-P) moiety of thiamine from aminoimidazole ribotide (AIR) in a radical S-adenosyl-L-methionine (SAM)-dependent reaction. This chain is Phosphomethylpyrimidine synthase, found in Bacillus pumilus (strain SAFR-032).